Reading from the N-terminus, the 161-residue chain is Cyclic pyranopterin monophosphate synthase (161 aa).

Substrate is bound by residues 75–77 (LCH) and 113–114 (ME). Asp-128 is a catalytic residue.

The protein belongs to the MoaC family. As to quaternary structure, homohexamer; trimer of dimers.

It carries out the reaction (8S)-3',8-cyclo-7,8-dihydroguanosine 5'-triphosphate = cyclic pyranopterin phosphate + diphosphate. It participates in cofactor biosynthesis; molybdopterin biosynthesis. Functionally, catalyzes the conversion of (8S)-3',8-cyclo-7,8-dihydroguanosine 5'-triphosphate to cyclic pyranopterin monophosphate (cPMP). The chain is Cyclic pyranopterin monophosphate synthase from Escherichia coli O9:H4 (strain HS).